Here is a 421-residue protein sequence, read N- to C-terminus: Glucose-1-phosphate adenylyltransferase (421 aa).

Alpha-D-glucose 1-phosphate is bound by residues Y108, G173, 188–189 (EK), and S206.

Belongs to the bacterial/plant glucose-1-phosphate adenylyltransferase family. In terms of assembly, homotetramer.

It catalyses the reaction alpha-D-glucose 1-phosphate + ATP + H(+) = ADP-alpha-D-glucose + diphosphate. Its pathway is glycan biosynthesis; glycogen biosynthesis. Its function is as follows. Involved in the biosynthesis of ADP-glucose, a building block required for the elongation reactions to produce glycogen. Catalyzes the reaction between ATP and alpha-D-glucose 1-phosphate (G1P) to produce pyrophosphate and ADP-Glc. The sequence is that of Glucose-1-phosphate adenylyltransferase from Mesorhizobium japonicum (strain LMG 29417 / CECT 9101 / MAFF 303099) (Mesorhizobium loti (strain MAFF 303099)).